The chain runs to 140 residues: Large ribosomal subunit protein uL16 (140 aa).

The protein belongs to the universal ribosomal protein uL16 family. As to quaternary structure, part of the 50S ribosomal subunit.

Its function is as follows. Binds 23S rRNA and is also seen to make contacts with the A and possibly P site tRNAs. This Citrifermentans bemidjiense (strain ATCC BAA-1014 / DSM 16622 / JCM 12645 / Bem) (Geobacter bemidjiensis) protein is Large ribosomal subunit protein uL16.